The following is a 75-amino-acid chain: Large ribosomal subunit protein bL31 (75 aa).

The protein belongs to the bacterial ribosomal protein bL31 family. Type A subfamily. As to quaternary structure, part of the 50S ribosomal subunit.

Binds the 23S rRNA. The polypeptide is Large ribosomal subunit protein bL31 (Pelodictyon phaeoclathratiforme (strain DSM 5477 / BU-1)).